The following is a 267-amino-acid chain: Phosphatidylglycerol--prolipoprotein diacylglyceryl transferase (267 aa).

A run of 3 helical transmembrane segments spans residues 18-38 (LSVR…MWFA), 57-77 (FLFY…VLFY), and 95-115 (GGMS…IFAW). A 1,2-diacyl-sn-glycero-3-phospho-(1'-sn-glycerol) is bound at residue Arg140. 3 helical membrane-spanning segments follow: residues 173–193 (SQLY…QWFI), 200–220 (GSVA…IEYF), and 233–253 (FISM…GLLI).

This sequence belongs to the Lgt family.

It localises to the cell inner membrane. It carries out the reaction L-cysteinyl-[prolipoprotein] + a 1,2-diacyl-sn-glycero-3-phospho-(1'-sn-glycerol) = an S-1,2-diacyl-sn-glyceryl-L-cysteinyl-[prolipoprotein] + sn-glycerol 1-phosphate + H(+). The protein operates within protein modification; lipoprotein biosynthesis (diacylglyceryl transfer). Catalyzes the transfer of the diacylglyceryl group from phosphatidylglycerol to the sulfhydryl group of the N-terminal cysteine of a prolipoprotein, the first step in the formation of mature lipoproteins. The polypeptide is Phosphatidylglycerol--prolipoprotein diacylglyceryl transferase (Pseudoalteromonas translucida (strain TAC 125)).